The following is a 77-amino-acid chain: Acyl carrier protein (77 aa).

The Carrier domain occupies 2–77; it reads ADALERVTKI…DAVNYINSKQ (76 aa). Ser-37 carries the O-(pantetheine 4'-phosphoryl)serine modification.

Belongs to the acyl carrier protein (ACP) family. Post-translationally, 4'-phosphopantetheine is transferred from CoA to a specific serine of apo-ACP by AcpS. This modification is essential for activity because fatty acids are bound in thioester linkage to the sulfhydryl of the prosthetic group.

It localises to the cytoplasm. The protein operates within lipid metabolism; fatty acid biosynthesis. Functionally, carrier of the growing fatty acid chain in fatty acid biosynthesis. The polypeptide is Acyl carrier protein (Bacillus licheniformis (strain ATCC 14580 / DSM 13 / JCM 2505 / CCUG 7422 / NBRC 12200 / NCIMB 9375 / NCTC 10341 / NRRL NRS-1264 / Gibson 46)).